The following is a 345-amino-acid chain: Heat-inducible transcription repressor HrcA (345 aa).

It belongs to the HrcA family.

Functionally, negative regulator of class I heat shock genes (grpE-dnaK-dnaJ and groELS operons). Prevents heat-shock induction of these operons. The chain is Heat-inducible transcription repressor HrcA from Zymomonas mobilis subsp. mobilis (strain ATCC 31821 / ZM4 / CP4).